The primary structure comprises 251 residues: Ubiquinone/menaquinone biosynthesis C-methyltransferase UbiE (251 aa).

S-adenosyl-L-methionine contacts are provided by residues T74, D95, and 123–124 (DA).

Belongs to the class I-like SAM-binding methyltransferase superfamily. MenG/UbiE family.

The catalysed reaction is a 2-demethylmenaquinol + S-adenosyl-L-methionine = a menaquinol + S-adenosyl-L-homocysteine + H(+). It catalyses the reaction a 2-methoxy-6-(all-trans-polyprenyl)benzene-1,4-diol + S-adenosyl-L-methionine = a 5-methoxy-2-methyl-3-(all-trans-polyprenyl)benzene-1,4-diol + S-adenosyl-L-homocysteine + H(+). Its pathway is quinol/quinone metabolism; menaquinone biosynthesis; menaquinol from 1,4-dihydroxy-2-naphthoate: step 2/2. It participates in cofactor biosynthesis; ubiquinone biosynthesis. Its function is as follows. Methyltransferase required for the conversion of demethylmenaquinol (DMKH2) to menaquinol (MKH2) and the conversion of 2-polyprenyl-6-methoxy-1,4-benzoquinol (DDMQH2) to 2-polyprenyl-3-methyl-6-methoxy-1,4-benzoquinol (DMQH2). This chain is Ubiquinone/menaquinone biosynthesis C-methyltransferase UbiE, found in Idiomarina loihiensis (strain ATCC BAA-735 / DSM 15497 / L2-TR).